Here is a 371-residue protein sequence, read N- to C-terminus: MPNQHPLLSSNLLPVGSNISTWWNFGSMLLTCLALQTSTGFFLAIHYTANINLAFSSMIHILRDVPYGWTMQNLHAIGASLFFMCIYTHIARGLYYGLYMNKWVWLSGTILLMLLMATAFFGYVLPWGQMSFWAATVITNLLTAIPYIGTTLTTWLWGGFSINDPTLTRFFALHFILPFLIISLSSVHIILLHNDGSNNPLGTNPDIDKIPFHPYHSYKDMLMTTIMITLLFIIMSFSPDLFNDPENFSKANPLVTPQHIKPEWYFLFAYGILRSIPNKLGGTLALLMSIMILTTTPFTHTSHVRSMTFRPFTQLLFWTLIATFITITWTATKPVEPPFILISQTASVIYFSFFIINPVLGLIENKAMMTK.

Transmembrane regions (helical) follow at residues 25–45 (FGSM…FLAI), 69–90 (WTMQ…YTHI), 105–125 (WLSG…GYVL), and 170–190 (FFAL…VHII). Heme b is bound by residues histidine 75 and histidine 89. 2 residues coordinate heme b: histidine 174 and histidine 188. Position 193 (histidine 193) interacts with a ubiquinone. 4 helical membrane passes run 218-238 (YKDM…MSFS), 280-300 (LGGT…PFTH), 312-332 (FTQL…WTAT), and 339-358 (FILI…IINP).

Belongs to the cytochrome b family. In terms of assembly, the cytochrome bc1 complex contains 3 respiratory subunits (MT-CYB, CYC1 and UQCRFS1), 2 core proteins (UQCRC1 and UQCRC2) and probably 6 low-molecular weight proteins. The cofactor is heme b.

It is found in the mitochondrion inner membrane. Functionally, component of the ubiquinol-cytochrome c reductase complex (complex III or cytochrome b-c1 complex) that is part of the mitochondrial respiratory chain. The b-c1 complex mediates electron transfer from ubiquinol to cytochrome c. Contributes to the generation of a proton gradient across the mitochondrial membrane that is then used for ATP synthesis. This chain is Cytochrome b (MT-CYB), found in Elapognathus coronatus (Western crowned snake).